A 138-amino-acid polypeptide reads, in one-letter code: MINKTRHNARRYALQALYQWFFCETKPDALISQFMEEHDLSDTEVAYFKEVVTGTIQHVAIIDELMTAHLDRKISALNPVELSVLRLSIYELLHRKEVPYKVVIDEALELVKEFGAEAGHKYVNAILDVLSSEIRKGV.

Belongs to the NusB family.

Involved in transcription antitermination. Required for transcription of ribosomal RNA (rRNA) genes. Binds specifically to the boxA antiterminator sequence of the ribosomal RNA (rrn) operons. This is Transcription antitermination protein NusB from Coxiella burnetii (strain CbuK_Q154) (Coxiella burnetii (strain Q154)).